The following is a 686-amino-acid chain: Thymidine kinase (686 aa).

Residues 1–14 are compositionally biased toward polar residues; it reads MASNSHNNYNTPRR. Disordered stretches follow at residues 1–21 and 64–85; these read MASN…DVPK and NPGL…PSSD. ATP is bound at residue 243 to 250; it reads GCMAAGKT. Glutamate 270 serves as the catalytic Proton acceptor. Residue glutamine 308 coordinates substrate. Residue arginine 398 coordinates ATP. Arginine 404 contributes to the substrate binding site.

This sequence belongs to the herpesviridae thymidine kinase family. Homodimer.

It catalyses the reaction thymidine + ATP = dTMP + ADP + H(+). Catalyzes the transfer of the gamma-phospho group of ATP to thymidine to generate dTMP in the salvage pathway of pyrimidine synthesis. The dTMP serves as a substrate for DNA polymerase during viral DNA replication. Allows the virus to be reactivated and to grow in non-proliferative cells lacking a high concentration of phosphorylated nucleic acid precursors. This chain is Thymidine kinase, found in Alcelaphine herpesvirus 1 (strain WC11) (AlHV-1).